The following is a 184-amino-acid chain: Prolyl-tRNA synthetase associated domain-containing protein 1 (184 aa).

It belongs to the PRORSD1 family.

This Danio rerio (Zebrafish) protein is Prolyl-tRNA synthetase associated domain-containing protein 1 (Prorsd1).